The primary structure comprises 713 residues: Peroxisomal biogenesis factor 8 (713 aa).

A disordered region spans residues 1-31 (MYRLGSQGRSIQSQLQNGDSSSGRPLQLQGT). Positions 7–30 (QGRSIQSQLQNGDSSSGRPLQLQG) are enriched in polar residues. Residues 711–713 (AKL) carry the Microbody targeting signal motif.

In terms of assembly, interacts with PEX5 (via N-terminus).

It is found in the peroxisome membrane. Its function is as follows. Essential component of the machinery required for the import of both PTS1 and PTS2 (and perhaps all) peroxisomal matrix proteins. Binding of PEX8 to the N-terminus of PEX5 cargo receptor induces a conformational change of the TPR domains and decrease their binding affinity to cargo, facilitating the release of the PTS1 proteins within the peroxisome. This Komagataella phaffii (strain GS115 / ATCC 20864) (Yeast) protein is Peroxisomal biogenesis factor 8.